The primary structure comprises 317 residues: MSAQQTNLGIVVGVDGSPCSHTAVEWAARDAQMRNVALRVVQVVPPVITAPEGWAFEYSRFQEAQKREIVEHSYLVAQAHQIVEQAHKVALEASSSGRAAQITGEVLHGQIVPTLANISRQVAMVVLGYRGQGAVAGALLGSVSSSLVRHAHGPVAVIPEEPRPARPPHAPVVVGIDGSPTSGLAAEIAFDEASRRGVDLVALHAWSDMGPLDFPRLNWAPIEWRNLEDEQEKMLARRLSGWQDRYPDVVVHKVVVCDRPAPRLLELAQTAQLVVVGSHGRGGFPGMHLGSVSRAVVNSGQAPVIVARIPQDPAVPA.

ATP-binding positions include G13, 128–134 (GYRGQGA), 142–143 (SV), G175, D208, 277–283 (GSHGRGG), and 291–293 (SVS).

Belongs to the universal stress protein A family.

The protein is Universal stress protein Mb2019 of Mycobacterium bovis (strain ATCC BAA-935 / AF2122/97).